The primary structure comprises 280 residues: Undecaprenyl-diphosphatase (280 aa).

8 helical membrane passes run 3-23, 45-65, 88-108, 115-135, 150-170, 191-211, 225-245, and 255-275; these read IILLIQAVIMGIVEGITEFLP, VDLFVVVVQFGAILAVIYDYW, QLGLSLIVATIPVMIVGFTFA, LFDPIVVAIMLIIGGLLIFYV, VGLKTALMIGLFQCLALIPGT, AEFSFFLGIPVIVGAALLDLL, VLGIGTVVSFIVALLCIRLLV, and IFAWLRIITGVLVLIAAWGFG.

This sequence belongs to the UppP family.

It is found in the cell inner membrane. The enzyme catalyses di-trans,octa-cis-undecaprenyl diphosphate + H2O = di-trans,octa-cis-undecaprenyl phosphate + phosphate + H(+). Its function is as follows. Catalyzes the dephosphorylation of undecaprenyl diphosphate (UPP). Confers resistance to bacitracin. The chain is Undecaprenyl-diphosphatase from Psychrobacter arcticus (strain DSM 17307 / VKM B-2377 / 273-4).